We begin with the raw amino-acid sequence, 136 residues long: MSLLNIFNIAGSAMIAQSQKLNVIASNLANMDSTIYKNGKFYPYIAKQVVFSLDTAKNSKIGGVKISAIIDDPSPMKLIYDPNNPMANNKGYILASNVNPITEMVNNIAAARSYQANIEVLKTAKSMIMKTLTISE.

It belongs to the flagella basal body rod proteins family. The basal body constitutes a major portion of the flagellar organelle and consists of four rings (L,P,S, and M) mounted on a central rod. The rod consists of about 26 subunits of FlgG in the distal portion, and FlgB, FlgC and FlgF are thought to build up the proximal portion of the rod with about 6 subunits each.

It is found in the bacterial flagellum basal body. This is Flagellar basal-body rod protein FlgC (flgC) from Buchnera aphidicola subsp. Acyrthosiphon pisum (strain APS) (Acyrthosiphon pisum symbiotic bacterium).